The chain runs to 264 residues: Thymidylate synthase (264 aa).

Arg21 is a dUMP binding site. (6R)-5,10-methylene-5,6,7,8-tetrahydrofolate is bound at residue His51. 126-127 (RR) serves as a coordination point for dUMP. Cys146 serves as the catalytic Nucleophile. DUMP is bound by residues 166–169 (RSGD), Asn177, and 207–209 (HLY). Position 169 (Asp169) interacts with (6R)-5,10-methylene-5,6,7,8-tetrahydrofolate. Ala263 lines the (6R)-5,10-methylene-5,6,7,8-tetrahydrofolate pocket.

Belongs to the thymidylate synthase family. Bacterial-type ThyA subfamily. As to quaternary structure, homodimer.

Its subcellular location is the cytoplasm. The enzyme catalyses dUMP + (6R)-5,10-methylene-5,6,7,8-tetrahydrofolate = 7,8-dihydrofolate + dTMP. It participates in pyrimidine metabolism; dTTP biosynthesis. Its function is as follows. Catalyzes the reductive methylation of 2'-deoxyuridine-5'-monophosphate (dUMP) to 2'-deoxythymidine-5'-monophosphate (dTMP) while utilizing 5,10-methylenetetrahydrofolate (mTHF) as the methyl donor and reductant in the reaction, yielding dihydrofolate (DHF) as a by-product. This enzymatic reaction provides an intracellular de novo source of dTMP, an essential precursor for DNA biosynthesis. This Xanthomonas axonopodis pv. citri (strain 306) protein is Thymidylate synthase.